Here is a 423-residue protein sequence, read N- to C-terminus: Peroxisomal membrane protein PMP47A (423 aa).

Solcar repeat units lie at residues 6-120, 142-230, and 239-373; these read YDDL…TGKT, LSVW…LKSF, and ITPV…LLIL. Residues 12-32 traverse the membrane as a helical segment; the sequence is AFAGAGGGLLSMTLTYPLVTL. Over residues 43-53 the composition is skewed to basic and acidic residues; it reads KKDQEKEKENS. A disordered region spans residues 43–70; that stretch reads KKDQEKEKENSNEDGSLSPKSSNTSDVS. Residues 55-70 are compositionally biased toward polar residues; sequence EDGSLSPKSSNTSDVS. Helical transmembrane passes span 98–118, 148–168, 204–224, and 245–265; these read SALF…ELTG, MAAG…IWVA, FTGI…YTIF, and LLLG…YITL. The segment at 278–308 is disordered; it reads SEDVEKERTDSVQSLPEDGSDEDNLKENSAK. Residues 353 to 373 traverse the membrane as a helical segment; the sequence is LLQSILNAAFLFYFKEELLIL.

Belongs to the mitochondrial carrier (TC 2.A.29) family.

The protein resides in the peroxisome membrane. In terms of biological role, may have transport activity. The chain is Peroxisomal membrane protein PMP47A (PMP47A) from Candida boidinii (Yeast).